Here is a 602-residue protein sequence, read N- to C-terminus: Fumarate reductase flavoprotein subunit (602 aa).

Residues 12–16 (GAGGA), 36–38 (ISK), 44–52 (SHTVAAEGG), 156–158 (HFV), 192–193 (AT), and D212 each bind FAD. Position 45 is a tele-8alpha-FAD histidine (H45). Active-site residues include H233 and R249. Residues 356–357 (HY), E380, and 391–397 (RLGSNSL) contribute to the FAD site. The disordered stretch occupies residues 581–602 (YGGEADAADKAEAANKKEKANG). A compositionally biased stretch (basic and acidic residues) spans 587-602 (AADKAEAANKKEKANG).

Belongs to the FAD-dependent oxidoreductase 2 family. FRD/SDH subfamily. As to quaternary structure, part of an enzyme complex containing four subunits: a flavoprotein (FrdA), an iron-sulfur protein (FrdB), and two hydrophobic anchor proteins (FrdC and FrdD). Can be cross-linked to SdhE. Purified from membrane fractions associated with protoporphyrinogen IX dehydrogenase (hemG). FAD is required as a cofactor.

Its subcellular location is the cell inner membrane. It carries out the reaction a quinone + succinate = fumarate + a quinol. The enzyme catalyses a menaquinone + succinate = a menaquinol + fumarate. With respect to regulation, inhibited by oxaloacetate, a substrate analog. Functionally, two distinct, membrane-bound, FAD-containing enzymes are responsible for the catalysis of fumarate and succinate interconversion; fumarate reductase is used during anaerobic growth, and succinate dehydrogenase is used during aerobic growth. The QFR enzyme complex binds 2 quinones in or near the membrane; 1 near the [3Fe-4S] cluster (QP is proximal to the [3Fe-4S] cluster, on the cytoplasmic side of the membrane) while QD (the distal cluster) is on the other side of the membrane. It is not clear if both of the quinol-binding sites are functionally relevant. This chain is Fumarate reductase flavoprotein subunit (frdA), found in Escherichia coli (strain K12).